We begin with the raw amino-acid sequence, 319 residues long: Inactive hydroxysteroid dehydrogenase-like protein 1 (319 aa).

The interval 2–82 (AAVDSFQLLY…CGASEAIAKA (81 aa)) is required for mitochondria translocation. NADP(+)-binding positions include 74 to 80 (GASEAIA), K99, and D125.

Belongs to the short-chain dehydrogenases/reductases (SDR) family. 17-beta-HSD 3 subfamily.

It is found in the mitochondrion. This chain is Inactive hydroxysteroid dehydrogenase-like protein 1 (hsdl1), found in Danio rerio (Zebrafish).